The chain runs to 474 residues: Glutamine synthetase (474 aa).

A GS beta-grasp domain is found at 15 to 99 (EDVQFIDVRF…MTFFIHDPIT (85 aa)). In terms of domain architecture, GS catalytic spans 107–474 (PRNIAKKAET…PYEFTLYYDI (368 aa)). Mg(2+)-binding residues include E132 and E134. E210 serves as a coordination point for ATP. The Mg(2+) site is built by E215 and E223. L-glutamate-binding positions include 267–268 (NG) and G268. H272 contributes to the Mg(2+) binding site. ATP-binding positions include 274-276 (HSS) and S276. Positions 325, 331, and 343 each coordinate L-glutamate. Residues R343, R348, and K357 each contribute to the ATP site. E362 contributes to the Mg(2+) binding site. L-glutamate is bound at residue R364. Y402 carries the O-AMP-tyrosine modification.

The protein belongs to the glutamine synthetase family. In terms of assembly, oligomer of 12 subunits arranged in the form of two hexagons. It depends on Mg(2+) as a cofactor.

It localises to the cytoplasm. It carries out the reaction L-glutamate + NH4(+) + ATP = L-glutamine + ADP + phosphate + H(+). Its activity is regulated as follows. The activity of this enzyme could be controlled by adenylation under conditions of abundant glutamine. Catalyzes the ATP-dependent biosynthesis of glutamine from glutamate and ammonia. In Frankia alni, this protein is Glutamine synthetase.